The sequence spans 578 residues: Synaptic defective enhancer 1 (578 aa).

Disordered stretches follow at residues 1 to 62 (MGEP…RKET), 173 to 216 (SEQA…SMDQ), 426 to 457 (PPLP…VSSA), and 474 to 578 (LGLH…FSNF). Positions 444–455 (PAAPVPASVPVS) are enriched in low complexity. Composition is skewed to pro residues over residues 481-491 (PPPPPPPPPPT) and 500-542 (IPPP…PNPN). Residues 565–578 (NQFPPQQQQSFSNF) show a composition bias toward low complexity.

As to quaternary structure, may interact (via C-terminus) with ssup-72; the interaction may prevent ssup-72 binding to RNA polymerase II subunit ama-1. In terms of tissue distribution, expressed in germline, oocytes, epidermis, pharyngeal bulb and neurons.

The protein resides in the nucleus. Its subcellular location is the nucleus speckle. Its function is as follows. Acts as a negative regulator of nuclear pre-mRNA 3'-end processing (mRNA polyadenylation). Plays a role in tissue-specific expression of protein isoforms by regulating differential processing of pre-mRNA 3'-end (alternative polyadenylation). In neurons, regulates alternative polyadenylation of specific mRNAs including unc-44 and dlk-1 by interacting with phosphatase ssup-72 and thus preventing ssup-72 dephosphorylation of RNA polymerase II subunit ama-1. Specifically, alters the usage of internal polyadenylation sites (PAS) to promote the production of neuron-specific unc-44 isoform and dlk-1 isoform c, both required for normal synapse and axon development. Conversely, in the epidermis, by inhibiting ssup-72 function, promotes the usage of an internal PAS preventing the production of one of unc-44 isoforms. In neurons, also negatively regulates protein levels of pre-RNA processing protein psf-2. This chain is Synaptic defective enhancer 1, found in Caenorhabditis elegans.